Here is a 333-residue protein sequence, read N- to C-terminus: MNQTLIQEILEVVEQAAIASAKLTGLGQKDEADAAAVEAMRLRMGKIEMKGKIVIGEGERDEAPMLYIGEEVGSGSGPGVDFAVDPCEGTNLCANNQRGSMAVLAASDTGGLFNAPDFYMNKLAAPPAAKGKVDIRNSATENLKILSDCLDLSIDELTVVVMDRTRHKDLIKEIRGCGAKVQPISDGDVQAAIACGFAGTGTHCLMGIGAAPEGVISAAAMRALGGHFQGQLVYDPAIAQTSEWADYTKEGNIKRLNEMGITDIDKIYEANELASGENVVFAGSGITDGLLFDGVKFERDCVRTSSLVISTLDSTARFTNTVHIKDGAKSISL.

Positions 33, 57, 85, and 88 each coordinate Mn(2+). Substrate contacts are provided by residues 88 to 90 (EGT), tyrosine 119, 164 to 166 (RTR), and 186 to 188 (DGD). Position 213 (glutamate 213) interacts with Mn(2+).

It belongs to the FBPase class 2 family. As to quaternary structure, homotetramer. The cofactor is Mn(2+).

It carries out the reaction beta-D-fructose 1,6-bisphosphate + H2O = beta-D-fructose 6-phosphate + phosphate. The enzyme catalyses D-sedoheptulose 1,7-bisphosphate + H2O = D-sedoheptulose 7-phosphate + phosphate. Its pathway is carbohydrate biosynthesis; Calvin cycle. In terms of biological role, catalyzes the hydrolysis of fructose 1,6-bisphosphate (Fru 1,6-P2) and sedoheptulose 1,7-bisphosphate (Sed 1,7-P2) to fructose 6-phosphate and sedoheptulose 7-phosphate, respectively. This chain is D-fructose 1,6-bisphosphatase class 2/sedoheptulose 1,7-bisphosphatase, found in Prochlorococcus marinus (strain MIT 9312).